The chain runs to 98 residues: uncharacterized protein (98 aa).

Belongs to the HesB/IscA family.

This is an uncharacterized protein from Staphylococcus saprophyticus subsp. saprophyticus (strain ATCC 15305 / DSM 20229 / NCIMB 8711 / NCTC 7292 / S-41).